A 440-amino-acid chain; its full sequence is Methylenetetrahydrofolate--tRNA-(uracil-5-)-methyltransferase TrmFO (440 aa).

14–19 (GAGLAG) contacts FAD.

This sequence belongs to the MnmG family. TrmFO subfamily. FAD is required as a cofactor.

The protein resides in the cytoplasm. The enzyme catalyses uridine(54) in tRNA + (6R)-5,10-methylene-5,6,7,8-tetrahydrofolate + NADH + H(+) = 5-methyluridine(54) in tRNA + (6S)-5,6,7,8-tetrahydrofolate + NAD(+). It catalyses the reaction uridine(54) in tRNA + (6R)-5,10-methylene-5,6,7,8-tetrahydrofolate + NADPH + H(+) = 5-methyluridine(54) in tRNA + (6S)-5,6,7,8-tetrahydrofolate + NADP(+). Its function is as follows. Catalyzes the folate-dependent formation of 5-methyl-uridine at position 54 (M-5-U54) in all tRNAs. This Bdellovibrio bacteriovorus (strain ATCC 15356 / DSM 50701 / NCIMB 9529 / HD100) protein is Methylenetetrahydrofolate--tRNA-(uracil-5-)-methyltransferase TrmFO.